The primary structure comprises 319 residues: Glycine--tRNA ligase alpha subunit (319 aa).

The disordered stretch occupies residues Arg290–Gly319. Residues Gly307–Gly319 are compositionally biased toward basic and acidic residues.

Belongs to the class-II aminoacyl-tRNA synthetase family. Tetramer of two alpha and two beta subunits.

The protein resides in the cytoplasm. The enzyme catalyses tRNA(Gly) + glycine + ATP = glycyl-tRNA(Gly) + AMP + diphosphate. This Moorella thermoacetica (strain ATCC 39073 / JCM 9320) protein is Glycine--tRNA ligase alpha subunit.